The sequence spans 1741 residues: DNA-directed RNA polymerase III subunit RPC1 (1741 aa).

C79, C82, C89, H92, C119, C122, and C160 together coordinate Zn(2+). Residues D722, D724, and D726 each contribute to the Mg(2+) site. A bridging helix region spans residues 1099–1111 (PFEFLAHARAGRD). Residues 1719–1741 (RHANKRSWSRGKERHASLKPKNR) form a disordered region.

This sequence belongs to the RNA polymerase beta' chain family. As to quaternary structure, component of the RNA polymerase III (Pol III) complex consisting of 17 subunits.

The protein resides in the nucleus. It catalyses the reaction RNA(n) + a ribonucleoside 5'-triphosphate = RNA(n+1) + diphosphate. Its function is as follows. DNA-dependent RNA polymerase catalyzes the transcription of DNA into RNA using the four ribonucleoside triphosphates as substrates. Largest and catalytic core component of RNA polymerase III which synthesizes small RNAs, such as 5S rRNA and tRNAs. Forms the polymerase active center together with the second largest subunit. A single-stranded DNA template strand of the promoter is positioned within the central active site cleft of Pol III. A bridging helix emanates from RPC1 and crosses the cleft near the catalytic site and is thought to promote translocation of Pol III by acting as a ratchet that moves the RNA-DNA hybrid through the active site by switching from straight to bent conformations at each step of nucleotide addition. This chain is DNA-directed RNA polymerase III subunit RPC1 (RPOA3), found in Giardia intestinalis (Giardia lamblia).